Here is a 184-residue protein sequence, read N- to C-terminus: MTHIAVIDNHGQFTHLEQRALRDLGVDVELVDNTTSPEQLIQTADGLVLSGGPDIDRVGNCPEYLELDIPILGICLGMQLLANELGGSVAAGDYGGYADVDIEILDDTDPLIGSLAPETRVWASHADEVKSVPEGFERTARSDVCRIEAMSNRDQERYGVQWHPEVAHTERGEEVFKNFIARCQ.

In terms of domain architecture, Glutamine amidotransferase type-1 spans histidine 3–glutamine 184. The active-site Nucleophile is cysteine 75. Catalysis depends on residues histidine 163 and glutamate 165.

In terms of assembly, heterodimer composed of a glutamine amidotransferase subunit (A) and a GMP-binding subunit (B).

It catalyses the reaction XMP + L-glutamine + ATP + H2O = GMP + L-glutamate + AMP + diphosphate + 2 H(+). The protein operates within purine metabolism; GMP biosynthesis; GMP from XMP (L-Gln route): step 1/1. In terms of biological role, catalyzes the synthesis of GMP from XMP. This Haloquadratum walsbyi (strain DSM 16790 / HBSQ001) protein is GMP synthase [glutamine-hydrolyzing] subunit A.